The sequence spans 288 residues: Bifunctional protein FolD (288 aa).

Residues 166–168 (GRS), serine 191, and isoleucine 232 each bind NADP(+).

It belongs to the tetrahydrofolate dehydrogenase/cyclohydrolase family. As to quaternary structure, homodimer.

It carries out the reaction (6R)-5,10-methylene-5,6,7,8-tetrahydrofolate + NADP(+) = (6R)-5,10-methenyltetrahydrofolate + NADPH. The enzyme catalyses (6R)-5,10-methenyltetrahydrofolate + H2O = (6R)-10-formyltetrahydrofolate + H(+). It functions in the pathway one-carbon metabolism; tetrahydrofolate interconversion. Catalyzes the oxidation of 5,10-methylenetetrahydrofolate to 5,10-methenyltetrahydrofolate and then the hydrolysis of 5,10-methenyltetrahydrofolate to 10-formyltetrahydrofolate. This chain is Bifunctional protein FolD, found in Rickettsia canadensis (strain McKiel).